We begin with the raw amino-acid sequence, 689 residues long: Glycine--tRNA ligase beta subunit (689 aa).

Belongs to the class-II aminoacyl-tRNA synthetase family. Tetramer of two alpha and two beta subunits.

Its subcellular location is the cytoplasm. The catalysed reaction is tRNA(Gly) + glycine + ATP = glycyl-tRNA(Gly) + AMP + diphosphate. The sequence is that of Glycine--tRNA ligase beta subunit from Yersinia pseudotuberculosis serotype O:1b (strain IP 31758).